Reading from the N-terminus, the 776-residue chain is General transcription and DNA repair factor IIH helicase subunit XPD (776 aa).

One can recognise a Helicase ATP-binding domain in the interval 7–277; that stretch reads DLLVYFPYSY…KKVDEKRLKD (271 aa). Position 42-49 (42-49) interacts with ATP; the sequence is MPSGTGKT. Cysteine 115, cysteine 133, cysteine 150, and cysteine 184 together coordinate [4Fe-4S] cluster. The DEAH box signature appears at 228-231; sequence DEAH. The segment at 736–776 is disordered; the sequence is HVEKQSTSKPPQQQNSAINSTITTSTTTTTTTSTISETHLT. The span at 742-754 shows a compositional bias: polar residues; that stretch reads TSKPPQQQNSAIN. Residues 755–776 show a composition bias toward low complexity; sequence STITTSTTTTTTTSTISETHLT.

It belongs to the helicase family. RAD3/XPD subfamily. Component of the 7-subunit TFIIH core complex composed of XPB/repB, XPD/repD, gtf2h1, gtf2h2, gtf2h3, gtf2h4 and gtf2h5, which is active in NER. The core complex associates with the 3-subunit CDK-activating kinase (CAK) module composed of cycH/cyclin H, cdk7 and mnat1 to form the 10-subunit holoenzyme (holo-TFIIH) active in transcription. The cofactor is Mg(2+). [4Fe-4S] cluster is required as a cofactor.

The protein resides in the nucleus. The catalysed reaction is Couples ATP hydrolysis with the unwinding of duplex DNA at the replication fork by translocating in the 5'-3' direction. This creates two antiparallel DNA single strands (ssDNA). The leading ssDNA polymer is the template for DNA polymerase III holoenzyme which synthesizes a continuous strand.. It catalyses the reaction ATP + H2O = ADP + phosphate + H(+). Functionally, ATP-dependent 5'-3' DNA helicase, component of the general transcription and DNA repair factor IIH (TFIIH) core complex, which is involved in general and transcription-coupled nucleotide excision repair (NER) of damaged DNA and, when complexed to CDK-activating kinase (CAK), in transcription by RNA polymerase II. In NER, TFIIH acts by opening DNA around the lesion to allow the excision of the damaged oligonucleotide and its replacement by a new DNA fragment. The ATP-dependent helicase activity of XPD/repD is required for DNA opening. In transcription, TFIIH has an essential role in transcription initiation. When the pre-initiation complex (PIC) has been established, TFIIH is required for promoter opening and promoter escape. Phosphorylation of the C-terminal tail (CTD) of the largest subunit of RNA polymerase II by the kinase module CAK controls the initiation of transcription. XPD/repD acts by forming a bridge between CAK and the core-TFIIH complex. The sequence is that of General transcription and DNA repair factor IIH helicase subunit XPD from Dictyostelium discoideum (Social amoeba).